We begin with the raw amino-acid sequence, 71 residues long: uncharacterized protein (71 aa).

Basic residues predominate over residues 1-10 (MHRKKRKKEK). The interval 1–20 (MHRKKRKKEKKRTEKDNTTN) is disordered. A helical transmembrane segment spans residues 21–43 (LPPLFLFPCSLSLPTLLAPVHYI).

Its subcellular location is the membrane. This is an uncharacterized protein from Saccharomyces cerevisiae (strain ATCC 204508 / S288c) (Baker's yeast).